The chain runs to 257 residues: Beta-fibrinogenase (257 aa).

Positions 1 to 18 (MVLIRVLANLLLLQLSHA) are cleaved as a signal peptide. A propeptide spanning residues 19-24 (QKSSEL) is cleaved from the precursor. In terms of domain architecture, Peptidase S1 spans 25–248 (VVGGDECNIN…YTDWIQSIIA (224 aa)). 6 disulfide bridges follow: cysteine 31–cysteine 162, cysteine 49–cysteine 65, cysteine 97–cysteine 255, cysteine 141–cysteine 209, cysteine 173–cysteine 188, and cysteine 199–cysteine 224. Residue asparagine 44 is glycosylated (N-linked (GlcNAc...) asparagine). Histidine 64 functions as the Charge relay system in the catalytic mechanism. N-linked (GlcNAc...) asparagine glycosylation is found at asparagine 78 and asparagine 102. The active-site Charge relay system is aspartate 109. N-linked (GlcNAc...) asparagine glycosylation is found at asparagine 153 and asparagine 169. Serine 203 functions as the Charge relay system in the catalytic mechanism. N-linked (GlcNAc...) asparagine glycosylation is present at asparagine 250.

In terms of assembly, monomer. In terms of processing, glycosylated. Contains 23.0% of hexoses, 8.3% of hexosamines and 1.0% of sialic acids. Expressed by the venom gland.

The protein localises to the secreted. With respect to regulation, inhibited by diisopropylfluorophosphate (DFP) and PMSF. Its function is as follows. Snake venom serine protease that has fibrinogenolytic activities by hydrolyzing the beta chain of fibrinogen (FGB). Typical arginine esterase which hydrolyzes esters and amides of arginine. In Macrovipera lebetinus (Levantine viper), this protein is Beta-fibrinogenase.